A 486-amino-acid chain; its full sequence is uncharacterized protein (486 aa).

9 LRR repeats span residues 18-39, 43-59, 60-81, 82-103, 104-125, 126-147, 148-168, 169-190, and 198-219; these read NLKKIIINRDNVININILKKLV, ELHIIYYDNNILNNIPE, NIKSLYISNLNIINLNFITKLK, NITYLDISYNKNSNISNIILPH, SIEFLNCESCNINDYNFINNLV, NLKKLIISKNKFGNFNNVFPIS, IVELNMESIQIKDYKFIEKLI, NLKKLDISFNVKKNNIHLIKFP, and DYQSYKENYNYLKNLSNIIEYE.

This is an uncharacterized protein from Amsacta moorei entomopoxvirus (AmEPV).